An 84-amino-acid polypeptide reads, in one-letter code: Dolichol phosphate-mannose biosynthesis regulatory protein (84 aa).

The next 2 helical transmembrane spans lie at 11–31 and 49–69; these read FGLVAVSLIIFTYYTTWVILL and YAVLIPLATGLLLLLFVGLFI.

This sequence belongs to the DPM2 family. Component of the dolichol-phosphate mannose (DPM) synthase complex composed of DPM1, DPM2 and DPM3; in the complex interacts directly with DPM3. Component of the glycosylphosphatidylinositol-N-acetylglucosaminyltransferase (GPI-GnT) complex composed at least by PIGA, PIGC, PIGH, PIGP, PIGQ, PIGY and DPM2. Interacts with PIGA, PIGC and PIGQ.

It localises to the endoplasmic reticulum membrane. The protein operates within protein modification; protein glycosylation. Regulates the biosynthesis of dolichol phosphate-mannose. Regulatory subunit of the dolichol-phosphate mannose (DPM) synthase complex; essential for the ER localization and stable expression of DPM1. Part of the glycosylphosphatidylinositol-N-acetylglucosaminyltransferase (GPI-GnT) complex that catalyzes the transfer of N-acetylglucosamine from UDP-N-acetylglucosamine to phosphatidylinositol and participates in the first step of GPI biosynthesis. May act by regulating the GPI-GNT complex. The polypeptide is Dolichol phosphate-mannose biosynthesis regulatory protein (Cricetulus griseus (Chinese hamster)).